We begin with the raw amino-acid sequence, 254 residues long: Leucyl/phenylalanyl-tRNA--protein transferase (254 aa).

This sequence belongs to the L/F-transferase family.

The protein localises to the cytoplasm. It carries out the reaction N-terminal L-lysyl-[protein] + L-leucyl-tRNA(Leu) = N-terminal L-leucyl-L-lysyl-[protein] + tRNA(Leu) + H(+). It catalyses the reaction N-terminal L-arginyl-[protein] + L-leucyl-tRNA(Leu) = N-terminal L-leucyl-L-arginyl-[protein] + tRNA(Leu) + H(+). The catalysed reaction is L-phenylalanyl-tRNA(Phe) + an N-terminal L-alpha-aminoacyl-[protein] = an N-terminal L-phenylalanyl-L-alpha-aminoacyl-[protein] + tRNA(Phe). In terms of biological role, functions in the N-end rule pathway of protein degradation where it conjugates Leu, Phe and, less efficiently, Met from aminoacyl-tRNAs to the N-termini of proteins containing an N-terminal arginine or lysine. This Burkholderia orbicola (strain MC0-3) protein is Leucyl/phenylalanyl-tRNA--protein transferase.